Here is a 274-residue protein sequence, read N- to C-terminus: Thiamine kinase (274 aa).

The protein belongs to the thiamine kinase family.

The enzyme catalyses thiamine + ATP = thiamine phosphate + ADP + H(+). Its pathway is cofactor biosynthesis; thiamine diphosphate biosynthesis; thiamine phosphate from thiamine: step 1/1. In terms of biological role, catalyzes the ATP-dependent phosphorylation of thiamine to thiamine phosphate. Is involved in thiamine salvage. The chain is Thiamine kinase from Salmonella newport (strain SL254).